Reading from the N-terminus, the 308-residue chain is Glutaminase 2 (308 aa).

Ser-66, Asn-117, Glu-161, Asn-168, Tyr-192, Tyr-244, and Val-262 together coordinate substrate.

It belongs to the glutaminase family. Homotetramer.

It carries out the reaction L-glutamine + H2O = L-glutamate + NH4(+). In Shigella flexneri, this protein is Glutaminase 2.